The primary structure comprises 364 residues: UDP-N-acetylglucosamine--N-acetylmuramyl-(pentapeptide) pyrophosphoryl-undecaprenol N-acetylglucosamine transferase (364 aa).

UDP-N-acetyl-alpha-D-glucosamine-binding positions include 10-12, asparagine 124, arginine 166, serine 196, and glutamine 297; that span reads TGG.

The protein belongs to the glycosyltransferase 28 family. MurG subfamily.

It is found in the cell membrane. The catalysed reaction is di-trans,octa-cis-undecaprenyl diphospho-N-acetyl-alpha-D-muramoyl-L-alanyl-D-glutamyl-meso-2,6-diaminopimeloyl-D-alanyl-D-alanine + UDP-N-acetyl-alpha-D-glucosamine = di-trans,octa-cis-undecaprenyl diphospho-[N-acetyl-alpha-D-glucosaminyl-(1-&gt;4)]-N-acetyl-alpha-D-muramoyl-L-alanyl-D-glutamyl-meso-2,6-diaminopimeloyl-D-alanyl-D-alanine + UDP + H(+). It functions in the pathway cell wall biogenesis; peptidoglycan biosynthesis. Functionally, cell wall formation. Catalyzes the transfer of a GlcNAc subunit on undecaprenyl-pyrophosphoryl-MurNAc-pentapeptide (lipid intermediate I) to form undecaprenyl-pyrophosphoryl-MurNAc-(pentapeptide)GlcNAc (lipid intermediate II). This chain is UDP-N-acetylglucosamine--N-acetylmuramyl-(pentapeptide) pyrophosphoryl-undecaprenol N-acetylglucosamine transferase, found in Caldanaerobacter subterraneus subsp. tengcongensis (strain DSM 15242 / JCM 11007 / NBRC 100824 / MB4) (Thermoanaerobacter tengcongensis).